We begin with the raw amino-acid sequence, 413 residues long: Transforming growth factor beta-2 proprotein (413 aa).

Positions 1–19 are cleaved as a signal peptide; sequence MHYYVLFTFLTLDLAPVAL. N-linked (GlcNAc...) asparagine glycans are attached at residues Asn72, Asn140, and Asn241. 4 cysteine pairs are disulfide-bonded: Cys308–Cys317, Cys316–Cys379, Cys345–Cys410, and Cys349–Cys412.

The protein belongs to the TGF-beta family. In terms of assembly, interacts with Transforming growth factor beta-2 (TGF-beta-2) chain; interaction is non-covalent and maintains (TGF-beta-2) in a latent state. As to quaternary structure, homodimer; disulfide-linked. Interacts with TGF-beta receptors (tgfbr1 and tgfbr2), leading to signal transduction. In terms of processing, the precursor proprotein is cleaved in the Golgi apparatus to form Transforming growth factor beta-2 (TGF-beta-2) and Latency-associated peptide (LAP) chains, which remain non-covalently linked, rendering TGF-beta-2 inactive.

It is found in the secreted. The protein resides in the extracellular space. It localises to the extracellular matrix. Its function is as follows. Precursor of the Latency-associated peptide (LAP) and Transforming growth factor beta-2 (TGF-beta-2) chains, which constitute the regulatory and active subunit of TGF-beta-2, respectively. Required to maintain the Transforming growth factor beta-2 (TGF-beta-2) chain in a latent state during storage in extracellular matrix. Associates non-covalently with TGF-beta-2 and regulates its activation via interaction with 'milieu molecules', such as ltbp1 and lrrc32/garp, that control activation of TGF-beta-2. In terms of biological role, multifunctional protein that regulates various processes such as angiogenesis and heart development. Activation into mature form follows different steps: following cleavage of the proprotein in the Golgi apparatus, Latency-associated peptide (LAP) and Transforming growth factor beta-2 (TGF-beta-2) chains remain non-covalently linked rendering TGF-beta-2 inactive during storage in extracellular matrix. At the same time, LAP chain interacts with 'milieu molecules', such as ltbp1 and lrrc32/garp, that control activation of TGF-beta-2 and maintain it in a latent state during storage in extracellular milieus. Once activated following release of LAP, TGF-beta-2 acts by binding to TGF-beta receptors (tgfbr1 and tgfbr2), which transduce signal. This Xenopus laevis (African clawed frog) protein is Transforming growth factor beta-2 proprotein (tgfb2).